We begin with the raw amino-acid sequence, 98 residues long: MSLTYMNMFMAFMISLLGLLMYRSHMMSSLLCLEGMMLSLFVMMTVIILNTHLTLASMIPIILLVFAACEAALGLSLLVMVSTTYGMDYVQNLNLLQC.

3 consecutive transmembrane segments (helical) span residues 1-21 (MSLTYMNMFMAFMISLLGLLM), 29-49 (SLLCLEGMMLSLFVMMTVIIL), and 61-81 (IILLVFAACEAALGLSLLVMV).

Belongs to the complex I subunit 4L family. In terms of assembly, core subunit of respiratory chain NADH dehydrogenase (Complex I) which is composed of 45 different subunits.

Its subcellular location is the mitochondrion inner membrane. It carries out the reaction a ubiquinone + NADH + 5 H(+)(in) = a ubiquinol + NAD(+) + 4 H(+)(out). Functionally, core subunit of the mitochondrial membrane respiratory chain NADH dehydrogenase (Complex I) which catalyzes electron transfer from NADH through the respiratory chain, using ubiquinone as an electron acceptor. Part of the enzyme membrane arm which is embedded in the lipid bilayer and involved in proton translocation. The polypeptide is NADH-ubiquinone oxidoreductase chain 4L (MT-ND4L) (Uroderma bilobatum (Tent-making bat)).